Consider the following 325-residue polypeptide: MATH domain and coiled-coil domain-containing protein At3g58430 (325 aa).

One can recognise an MATH domain in the interval 6–131; that stretch reads HKKFCWIIKN…KGDFKIIAEV (126 aa). Residues 258–306 adopt a coiled-coil conformation; it reads FKVDWLEKKLDQVKDKKEREQSGLARLHELEEYLLKLKQKCSNLDLLVE.

The sequence is that of MATH domain and coiled-coil domain-containing protein At3g58430 from Arabidopsis thaliana (Mouse-ear cress).